Here is a 418-residue protein sequence, read N- to C-terminus: MEINNGAQPENAAVSIPSRSPSGKSEKRKSPSIVSGCRTVMNERSFTNYWSVERFTVQLELHNPAEFMLAPKFGDGDYEFVMKLFPNGKDEETAGYLSLFLLINKCPNPRLRFRVSFTVETADGPRSCHLNKNLVTINRSGIVTASKFFSLDILRSAMNVYIPNDILTIGCELTIFGECTTQISSLFKPYQRTHSASSTSRSLSSPNTKCLKIDESSAHDAFTEFLSTGEFSDFIIVASCGREFPTHMCILAARSEYFKVLLRNHSTKEFMSKRLQFDDISARTLDVLLRHMYASAAGRVVKLEEDQLTEDLISAMDRLMINSLRDEVARLIGSKVTVDNVLTRISMAAELRLDDTYDVLLDFFSNHKHECMKLTAWDELESAKPPLAIKILRDAFSNTDSPSTTSMDSRIIDRITLT.

Residues 1–33 (MEINNGAQPENAAVSIPSRSPSGKSEKRKSPSI) form a disordered region. The region spanning 45-173 (SFTNYWSVER…NDILTIGCEL (129 aa)) is the MATH domain. The BTB domain occupies 232–293 (SDFIIVASCG…TLDVLLRHMY (62 aa)).

In terms of assembly, interacts with cul-3.

It functions in the pathway protein modification; protein ubiquitination. Functionally, probable substrate-specific adapter of an E3 ubiquitin-protein ligase complex which mediates the ubiquitination and subsequent proteasomal degradation of target proteins. In Caenorhabditis elegans, this protein is BTB and MATH domain-containing protein 41 (bath-41).